A 280-amino-acid polypeptide reads, in one-letter code: NLP effector protein Pc553546 (280 aa).

Positions 1–19 are cleaved as a signal peptide; it reads MNLVAALVLCFALLSSVRG. Residues 123-129 carry the Hepta-peptide GHRHDWE motif motif; that stretch reads AGRHDWA. N-linked (GlcNAc...) asparagine glycosylation is found at N142 and N209.

The protein belongs to the Necrosis inducing protein (NPP1) family.

The protein localises to the secreted. Secreted effector that contributes strongly to virulence during infection by P.capsici. The polypeptide is NLP effector protein Pc553546 (Phytophthora capsici).